A 25-amino-acid polypeptide reads, in one-letter code: MRAKWRKKRMRRLKRKRRKMRQRSK.

A disordered region spans residues 1-25; that stretch reads MRAKWRKKRMRRLKRKRRKMRQRSK.

This sequence belongs to the eukaryotic ribosomal protein eS32 family. Component of the large ribosomal subunit.

It is found in the cytoplasm. In terms of biological role, component of the small ribosomal subunit. The ribosome is a large ribonucleoprotein complex responsible for the synthesis of proteins in the cell. This is Small ribosomal subunit protein eS32 (rpl41) from Cyprinus carpio (Common carp).